We begin with the raw amino-acid sequence, 444 residues long: Deoxyguanosinetriphosphate triphosphohydrolase-like protein (444 aa).

The HD domain maps to Arg-66–Gly-259.

The protein belongs to the dGTPase family. Type 2 subfamily.

This chain is Deoxyguanosinetriphosphate triphosphohydrolase-like protein, found in Vibrio campbellii (strain ATCC BAA-1116).